Consider the following 554-residue polypeptide: Arginine--tRNA ligase (554 aa).

The 'HIGH' region signature appears at 129–139; it reads ANPTGPLHIGH.

The protein belongs to the class-I aminoacyl-tRNA synthetase family. In terms of assembly, monomer.

It localises to the cytoplasm. It catalyses the reaction tRNA(Arg) + L-arginine + ATP = L-arginyl-tRNA(Arg) + AMP + diphosphate. The sequence is that of Arginine--tRNA ligase from Geobacter sp. (strain M21).